A 229-amino-acid chain; its full sequence is NAD-dependent protein deacylase (229 aa).

The Deacetylase sirtuin-type domain occupies 1 to 227 (MKNLVILSGA…QDLMPKLIEM (227 aa)). 9 to 28 (GAGISAESGIKTFRDADGLW) provides a ligand contact to NAD(+). Positions 53 and 56 each coordinate substrate. 86–89 (QNVD) contacts NAD(+). His-104 acts as the Proton acceptor in catalysis. NAD(+) is bound at residue 169-171 (GTS).

This sequence belongs to the sirtuin family. Class III subfamily.

It is found in the cytoplasm. It carries out the reaction N(6)-acetyl-L-lysyl-[protein] + NAD(+) + H2O = 2''-O-acetyl-ADP-D-ribose + nicotinamide + L-lysyl-[protein]. The enzyme catalyses N(6)-succinyl-L-lysyl-[protein] + NAD(+) + H2O = 2''-O-succinyl-ADP-D-ribose + nicotinamide + L-lysyl-[protein]. NAD-dependent lysine deacetylase and desuccinylase that specifically removes acetyl and succinyl groups on target proteins. Modulates the activities of several proteins which are inactive in their acylated form. This is NAD-dependent protein deacylase from Helicobacter pylori (strain ATCC 700392 / 26695) (Campylobacter pylori).